Here is a 245-residue protein sequence, read N- to C-terminus: Membrane-associated progesterone-binding protein 4 (245 aa).

Residues 6-26 form a helical membrane-spanning segment; that stretch reads RFLLSPFVGVTFIVVLVSLYF. In terms of domain architecture, Cytochrome b5 heme-binding spans 39-138; it reads KRLFSAEELA…RTYTPVGKLV (100 aa). The interval 45–138 is steroid-binding; sequence EELALYNGTD…RTYTPVGKLV (94 aa).

It belongs to the cytochrome b5 family. MAPR subfamily.

The protein resides in the membrane. This Arabidopsis thaliana (Mouse-ear cress) protein is Membrane-associated progesterone-binding protein 4.